The chain runs to 38 residues: Alpha-2-macroglobulin homolog (38 aa).

The isoglutamyl cysteine thioester (Cys-Gln) cross-link spans 27-30 (CGEQ).

Belongs to the protease inhibitor I39 (alpha-2-macroglobulin) family. In terms of assembly, homodimer; disulfide-linked. Hemolymph.

The protein resides in the secreted. Its function is as follows. Is able to inhibit all four classes of proteinases by a unique 'trapping' mechanism. This protein has a peptide stretch, called the 'bait region' which contains specific cleavage sites for different proteinases. When a proteinase cleaves the bait region, a conformational change is induced in the protein which traps the proteinase. The entrapped enzyme remains active against low molecular weight substrates (activity against high molecular weight substrates is greatly reduced). Following cleavage in the bait region a thioester bond is hydrolyzed and mediates the covalent binding of the protein to the proteinase. In Homarus americanus (American lobster), this protein is Alpha-2-macroglobulin homolog.